We begin with the raw amino-acid sequence, 255 residues long: Tabinhibitin 7 (255 aa).

A signal peptide spans 1–23; it reads MTSILVSSFLLATLVLQYATIDA. The Cell attachment site motif lies at 32–34; sequence RGD. The 145-residue stretch at 67–211 folds into the SCP domain; sequence LSKINDVRDH…KARALLTCNF (145 aa).

This sequence belongs to the CRISP family. As to expression, expressed in salivary glands.

It localises to the secreted. Functionally, inhibits platelet aggregation induced by all agonists tested (ADP, arachidonic acid, the thromboxane A2 analog U46619, thrombin, and snake venom snaclecs (TMVA that activates platelet through GPIB, and stejnulxin that specifically acts through GPVI (GP6))). May act by competing with fibrinogen for binding to glycoprotein IIb/IIIa (ITGA2B/ITGB3). In Tabanus yao (Horsefly), this protein is Tabinhibitin 7.